Reading from the N-terminus, the 351-residue chain is Modulator of apoptosis 1 (351 aa).

Residues Tyr49 to Leu52 carry the LIR motif. The segment at Leu120–Glu127 is BH3-like. Positions Lys202–Arg205 are RASSF1-binding.

This sequence belongs to the PNMA family. As to quaternary structure, homodimer. Under normal circumstances, held in an inactive conformation by an intramolecular interaction. Interacts with BAX. Binding to RASSF1 isoform A (RASSF1A) relieves this inhibitory interaction and allows further binding to BAX. Also binds to BCL2 and BCLX. Recruited to the TNFRSF1A and TNFRSF10A complexes in response to their respective cognate ligand, after internalization. Interacts with TRIM39. Interacts with RASSF6. Interacts with ATG8 proteins MAP1LC3A, MAP1LC3B and MAP1LC3C. Does not interact with ATG8 proteins GABARAPL1, GABARAPL2 and GABARAP. Interacts with SQSTM1; promoting dissociation of SQSTM1 inclusion bodies that sequester KEAP1. Ubiquitinated and degraded during mitotic exit by APC/C-Cdh1, this modification is inhibited by TRIM39.

The protein resides in the cytoplasm. Its subcellular location is the cytosol. It is found in the mitochondrion outer membrane. It localises to the extracellular vesicle membrane. In terms of biological role, retrotransposon-derived protein that forms virion-like capsids. Acts as an effector of BAX during apoptosis: enriched at outer mitochondria membrane and associates with BAX upon induction of apoptosis, facilitating BAX-dependent mitochondrial outer membrane permeabilization and apoptosis. Required for death receptor-dependent apoptosis. When associated with RASSF1, promotes BAX conformational change and translocation to mitochondrial membranes in response to TNF and TNFSF10 stimulation. Also promotes autophagy: promotes phagophore closure via association with ATG8 proteins. Acts as an inhibitor of the NFE2L2/NRF2 pathway via interaction with SQSTM1: interaction promotes dissociation of SQSTM1 inclusion bodies that sequester KEAP1, relieving inactivation of the BCR(KEAP1) complex. The chain is Modulator of apoptosis 1 from Macaca fascicularis (Crab-eating macaque).